The following is a 338-amino-acid chain: tRNA N6-adenosine threonylcarbamoyltransferase (338 aa).

2 residues coordinate Fe cation: His-111 and His-115. Substrate-binding positions include 134–138 (LVSGG), Asp-167, Gly-180, and Asn-272. Position 300 (Asp-300) interacts with Fe cation.

The protein belongs to the KAE1 / TsaD family. Fe(2+) is required as a cofactor.

The protein resides in the cytoplasm. It carries out the reaction L-threonylcarbamoyladenylate + adenosine(37) in tRNA = N(6)-L-threonylcarbamoyladenosine(37) in tRNA + AMP + H(+). In terms of biological role, required for the formation of a threonylcarbamoyl group on adenosine at position 37 (t(6)A37) in tRNAs that read codons beginning with adenine. Is involved in the transfer of the threonylcarbamoyl moiety of threonylcarbamoyl-AMP (TC-AMP) to the N6 group of A37, together with TsaE and TsaB. TsaD likely plays a direct catalytic role in this reaction. This is tRNA N6-adenosine threonylcarbamoyltransferase from Shewanella halifaxensis (strain HAW-EB4).